The primary structure comprises 432 residues: Putative transferase At1g60990, chloroplastic (432 aa).

The N-terminal 57 residues, 1–57 (MNLLQSCKDMAMMMRIDSVSHITNTALLPCLYNGTVLRRRSLSLRKCGFRERKFQLR), are a transit peptide targeting the chloroplast.

The protein belongs to the GcvT family. Expressed in young leaves (at protein level).

The protein resides in the plastid. The protein localises to the chloroplast. Functionally, folate-dependent protein involved in Fe/S cluster biogenesis. Functionally complements an E.coli mutant defective in ygfZ. The sequence is that of Putative transferase At1g60990, chloroplastic from Arabidopsis thaliana (Mouse-ear cress).